A 434-amino-acid polypeptide reads, in one-letter code: Glutamyl-tRNA reductase 2 (434 aa).

Residues 57–60 (TCNR), S113, 118–120 (DFE), and Q124 each bind substrate. Catalysis depends on C58, which acts as the Nucleophile. NADP(+) is bound at residue 193–198 (GTGKIG).

This sequence belongs to the glutamyl-tRNA reductase family. As to quaternary structure, homodimer.

The catalysed reaction is (S)-4-amino-5-oxopentanoate + tRNA(Glu) + NADP(+) = L-glutamyl-tRNA(Glu) + NADPH + H(+). It functions in the pathway porphyrin-containing compound metabolism; protoporphyrin-IX biosynthesis; 5-aminolevulinate from L-glutamyl-tRNA(Glu): step 1/2. Catalyzes the NADPH-dependent reduction of glutamyl-tRNA(Glu) to glutamate 1-semialdehyde (GSA). This Flavobacterium johnsoniae (strain ATCC 17061 / DSM 2064 / JCM 8514 / BCRC 14874 / CCUG 350202 / NBRC 14942 / NCIMB 11054 / UW101) (Cytophaga johnsonae) protein is Glutamyl-tRNA reductase 2.